A 479-amino-acid polypeptide reads, in one-letter code: Protein nucleotidyltransferase YdiU (479 aa).

ATP-binding residues include Gly83, Gly85, Arg86, Lys106, Asp118, Gly119, Arg169, and Arg176. Catalysis depends on Asp245, which acts as the Proton acceptor. Mg(2+) is bound by residues Asn246 and Asp255. An ATP-binding site is contributed by Asp255.

The protein belongs to the SELO family. Mg(2+) serves as cofactor. It depends on Mn(2+) as a cofactor.

It carries out the reaction L-seryl-[protein] + ATP = 3-O-(5'-adenylyl)-L-seryl-[protein] + diphosphate. The enzyme catalyses L-threonyl-[protein] + ATP = 3-O-(5'-adenylyl)-L-threonyl-[protein] + diphosphate. The catalysed reaction is L-tyrosyl-[protein] + ATP = O-(5'-adenylyl)-L-tyrosyl-[protein] + diphosphate. It catalyses the reaction L-histidyl-[protein] + UTP = N(tele)-(5'-uridylyl)-L-histidyl-[protein] + diphosphate. It carries out the reaction L-seryl-[protein] + UTP = O-(5'-uridylyl)-L-seryl-[protein] + diphosphate. The enzyme catalyses L-tyrosyl-[protein] + UTP = O-(5'-uridylyl)-L-tyrosyl-[protein] + diphosphate. Functionally, nucleotidyltransferase involved in the post-translational modification of proteins. It can catalyze the addition of adenosine monophosphate (AMP) or uridine monophosphate (UMP) to a protein, resulting in modifications known as AMPylation and UMPylation. The polypeptide is Protein nucleotidyltransferase YdiU (Erwinia tasmaniensis (strain DSM 17950 / CFBP 7177 / CIP 109463 / NCPPB 4357 / Et1/99)).